Here is a 61-residue protein sequence, read N- to C-terminus: Photosystem II reaction center protein K (61 aa).

A propeptide spanning residues 1–24 (MINIVSLVCIYINSVPYSSIFFLD) is cleaved from the precursor. A helical transmembrane segment spans residues 36 to 56 (IVDIMPVIPLFFFLLAFVWQA).

The protein belongs to the PsbK family. As to quaternary structure, PSII is composed of 1 copy each of membrane proteins PsbA, PsbB, PsbC, PsbD, PsbE, PsbF, PsbH, PsbI, PsbJ, PsbK, PsbL, PsbM, PsbT, PsbX, PsbY, PsbZ, Psb30/Ycf12, at least 3 peripheral proteins of the oxygen-evolving complex and a large number of cofactors. It forms dimeric complexes.

It localises to the plastid. It is found in the chloroplast thylakoid membrane. In terms of biological role, one of the components of the core complex of photosystem II (PSII). PSII is a light-driven water:plastoquinone oxidoreductase that uses light energy to abstract electrons from H(2)O, generating O(2) and a proton gradient subsequently used for ATP formation. It consists of a core antenna complex that captures photons, and an electron transfer chain that converts photonic excitation into a charge separation. This Lotus japonicus (Lotus corniculatus var. japonicus) protein is Photosystem II reaction center protein K.